The primary structure comprises 343 residues: MPIDCKAKCGNKAALKRPKTGDALCKDCFFAAFEAEIHHTIVSSRLFRRGEKVAVAASGGKDSTVLAHVMKLLNERHDYGLDLVLLSIDEGITGYRDDSLETVKQNRDDYQMPLKILSYEELYGWTMDRIVAQIGRSNNCTFCGVFRRQALDRGAKLLGVDSIATGHNADDIAETVLMNILRGDTARLRRCTNIRTGGGEDSIPRVKPLKYSYEKEIVMYAHYKRLVYFSTECVFAPNAYRGHARAFLKDLEKVRPSVIMDIIYSGEQLRFKDTAKKPVRGICERCGFVSSQQPCKACVLLEGLNRGLPKLGIGKKSKGDRMIAQQNQELALRERANLVKNDF.

This sequence belongs to the TtcA family. CTU1/NCS6/ATPBD3 subfamily.

It is found in the cytoplasm. It participates in tRNA modification; 5-methoxycarbonylmethyl-2-thiouridine-tRNA biosynthesis. In terms of biological role, plays a central role in 2-thiolation of mcm(5)S(2)U at tRNA wobble positions of tRNA(Lys), tRNA(Glu) and tRNA(Gln). Directly binds tRNAs and probably acts by catalyzing adenylation of tRNAs, an intermediate required for 2-thiolation. It is unclear whether it acts as a sulfurtransferase that transfers sulfur from thiocarboxylated URM1 onto the uridine of tRNAs at wobble position. The protein is Cytoplasmic tRNA 2-thiolation protein 1 of Drosophila grimshawi (Hawaiian fruit fly).